The sequence spans 459 residues: Bifunctional protein GlmU (459 aa).

The interval 1-228 (MNFKAIILAA…IEELMGVNSR (228 aa)) is pyrophosphorylase. UDP-N-acetyl-alpha-D-glucosamine-binding positions include 8-11 (LAAG), K22, Q72, and 77-78 (GT). D101 is a binding site for Mg(2+). Positions 138, 153, 168, and 226 each coordinate UDP-N-acetyl-alpha-D-glucosamine. N226 lines the Mg(2+) pocket. A linker region spans residues 229–249 (VELSKAEEIMRRRINESHMVN). The tract at residues 250-459 (GVTIIDTNST…KKNQKDDQSK (210 aa)) is N-acetyltransferase. R331 and K349 together coordinate UDP-N-acetyl-alpha-D-glucosamine. H361 serves as the catalytic Proton acceptor. UDP-N-acetyl-alpha-D-glucosamine-binding residues include Y364 and N375. Residues 384–385 (NY), S403, T421, and R438 each bind acetyl-CoA.

In the N-terminal section; belongs to the N-acetylglucosamine-1-phosphate uridyltransferase family. The protein in the C-terminal section; belongs to the transferase hexapeptide repeat family. In terms of assembly, homotrimer. Mg(2+) serves as cofactor.

It is found in the cytoplasm. It carries out the reaction alpha-D-glucosamine 1-phosphate + acetyl-CoA = N-acetyl-alpha-D-glucosamine 1-phosphate + CoA + H(+). It catalyses the reaction N-acetyl-alpha-D-glucosamine 1-phosphate + UTP + H(+) = UDP-N-acetyl-alpha-D-glucosamine + diphosphate. The protein operates within nucleotide-sugar biosynthesis; UDP-N-acetyl-alpha-D-glucosamine biosynthesis; N-acetyl-alpha-D-glucosamine 1-phosphate from alpha-D-glucosamine 6-phosphate (route II): step 2/2. Its pathway is nucleotide-sugar biosynthesis; UDP-N-acetyl-alpha-D-glucosamine biosynthesis; UDP-N-acetyl-alpha-D-glucosamine from N-acetyl-alpha-D-glucosamine 1-phosphate: step 1/1. It functions in the pathway bacterial outer membrane biogenesis; LPS lipid A biosynthesis. In terms of biological role, catalyzes the last two sequential reactions in the de novo biosynthetic pathway for UDP-N-acetylglucosamine (UDP-GlcNAc). The C-terminal domain catalyzes the transfer of acetyl group from acetyl coenzyme A to glucosamine-1-phosphate (GlcN-1-P) to produce N-acetylglucosamine-1-phosphate (GlcNAc-1-P), which is converted into UDP-GlcNAc by the transfer of uridine 5-monophosphate (from uridine 5-triphosphate), a reaction catalyzed by the N-terminal domain. This chain is Bifunctional protein GlmU, found in Clostridioides difficile (strain 630) (Peptoclostridium difficile).